A 278-amino-acid chain; its full sequence is Putative cysteine-rich repeat secretory protein 19 (278 aa).

The signal sequence occupies residues 1–32; that stretch reads MYSSSSVSKRFVLVPIVVVVTTQLLLVRNVSS. 2 consecutive Gnk2-homologous domains span residues 39–147 and 160–267; these read YLHH…SLDT and PSAK…LYPF.

This sequence belongs to the cysteine-rich repeat secretory protein family.

It is found in the secreted. The sequence is that of Putative cysteine-rich repeat secretory protein 19 (CRRSP19) from Arabidopsis thaliana (Mouse-ear cress).